The following is a 417-amino-acid chain: Tol-Pal system protein TolB (417 aa).

The N-terminal stretch at 1 to 16 (MRYLWLFLIGTIGLFA) is a signal peptide.

It belongs to the TolB family. The Tol-Pal system is composed of five core proteins: the inner membrane proteins TolA, TolQ and TolR, the periplasmic protein TolB and the outer membrane protein Pal. They form a network linking the inner and outer membranes and the peptidoglycan layer.

It localises to the periplasm. In terms of biological role, part of the Tol-Pal system, which plays a role in outer membrane invagination during cell division and is important for maintaining outer membrane integrity. This chain is Tol-Pal system protein TolB, found in Helicobacter pylori (strain HPAG1).